Reading from the N-terminus, the 984-residue chain is Rhoptry neck protein 4 (984 aa).

Residues 1–26 (MAIKNTLTGSGLLVLLTLACGTTVQS) form the signal peptide. A disordered region spans residues 24–300 (VQSSPPTPAP…TPIPASKGIY (277 aa)). 2 stretches are compositionally biased toward polar residues: residues 66-85 (PQKT…NSKV) and 92-105 (SDTT…TSES). A glycan (N-linked (GlcNAc...) asparagine) is linked at asparagine 81. A compositionally biased stretch (pro residues) spans 106-117 (PPVPQLGTPPRP). Residues 129 to 172 (QPPTAAPRTSRSVDTGSGSDASTEQQAGGQKVVTPIPASKGIYP) form repeat 1. The span at 135-156 (PRTSRSVDTGSGSDASTEQQAG) shows a compositional bias: polar residues. The segment covering 214–228 (TGRRRAKARNRKRHP) has biased composition (basic residues). A compositionally biased stretch (polar residues) spans 242–285 (QPPTTASRPSNGEGESQPPTAAPRTSRSVDTGSGSDASTEQQAG). Repeat 2 spans residues 258-301 (QPPTAAPRTSRSVDTGSGSDASTEQQAGGQKVVTPIPASKGIYP). N-linked (GlcNAc...) asparagine glycosylation is found at asparagine 390 and asparagine 780. A disordered region spans residues 882–984 (GPTVSDESRR…EESTSKTSEL (103 aa)). The segment covering 892 to 901 (MIHPVRHRSR) has biased composition (basic residues). The segment covering 902 to 914 (TAPSSEAASTAAE) has biased composition (low complexity). N-linked (GlcNAc...) asparagine glycosylation occurs at asparagine 925. Residues 967 to 984 (LKQSDTLIEESTSKTSEL) are compositionally biased toward polar residues.

It localises to the secreted. It is found in the parasitophorous vacuole membrane. This Toxoplasma gondii protein is Rhoptry neck protein 4 (RON4).